The primary structure comprises 411 residues: Anaerobic nitric oxide reductase flavorubredoxin homolog (411 aa).

Residues 30 to 210 (LRGSSYNSYL…PFSRLVTPKI (181 aa)) form a zinc metallo-hydrolase region. Fe cation-binding residues include histidine 79, glutamate 81, aspartate 83, histidine 147, aspartate 166, histidine 227, cysteine 360, cysteine 363, cysteine 393, and cysteine 396. The Rubredoxin-like domain maps to 355 to 406 (GPRMQCSVCQWIYDPAKGEPMQDVAPGTPWSEVPDNFLCPECSLGKDVFDEL).

The protein in the N-terminal section; belongs to the zinc metallo-hydrolase group 3 family. Homotetramer. The cofactor is Fe cation.

It localises to the cytoplasm. Its pathway is nitrogen metabolism; nitric oxide reduction. Its function is as follows. Anaerobic nitric oxide reductase; uses NADH to detoxify nitric oxide (NO), protecting several 4Fe-4S NO-sensitive enzymes. Has at least 2 reductase partners, only one of which (NorW, flavorubredoxin reductase) has been identified. NO probably binds to the di-iron center. Also able to function as an aerobic oxygen reductase. The protein is Anaerobic nitric oxide reductase flavorubredoxin homolog of Escherichia coli O157:H7.